Reading from the N-terminus, the 88-residue chain is Small ribosomal subunit protein uS17 (88 aa).

Belongs to the universal ribosomal protein uS17 family. In terms of assembly, part of the 30S ribosomal subunit.

One of the primary rRNA binding proteins, it binds specifically to the 5'-end of 16S ribosomal RNA. The polypeptide is Small ribosomal subunit protein uS17 (Lawsonia intracellularis (strain PHE/MN1-00)).